Here is a 277-residue protein sequence, read N- to C-terminus: Sarcosine/dimethylglycine N-methyltransferase (277 aa).

It belongs to the methyltransferase superfamily. In terms of assembly, monomer.

It catalyses the reaction sarcosine + 2 S-adenosyl-L-methionine = glycine betaine + 2 S-adenosyl-L-homocysteine + 2 H(+). The catalysed reaction is sarcosine + S-adenosyl-L-methionine = N,N-dimethylglycine + S-adenosyl-L-homocysteine + H(+). It carries out the reaction N,N-dimethylglycine + S-adenosyl-L-methionine = glycine betaine + S-adenosyl-L-homocysteine + H(+). It participates in amine and polyamine biosynthesis; betaine biosynthesis via glycine pathway; betaine from glycine: step 2/3. It functions in the pathway amine and polyamine biosynthesis; betaine biosynthesis via glycine pathway; betaine from glycine: step 3/3. Its activity is regulated as follows. Inhibited by n-butylic acid and S-adenosyl-L-homocysteine. In terms of biological role, catalyzes the methylation of sarcosine and dimethylglycine to dimethylglycine and betaine, respectively, with S-adenosylmethionine (AdoMet) acting as the methyl donor. Activity with sarcosine is much weaker than activity with dimethylglycine. The protein is Sarcosine/dimethylglycine N-methyltransferase of Aphanothece halophytica.